The following is a 401-amino-acid chain: Probable inactive purple acid phosphatase 14 (401 aa).

The signal sequence occupies residues 1-30 (MEETRRRFVISSVLSVSLIYLCLSTCHVSA). The N-linked (GlcNAc...) asparagine glycan is linked to asparagine 79. A substrate-binding site is contributed by asparagine 197. Asparagine 197 lines the Zn(2+) pocket. A glycan (N-linked (GlcNAc...) asparagine) is linked at asparagine 246. Histidine 256 lines the Zn(2+) pocket. N-linked (GlcNAc...) asparagine glycosylation is present at asparagine 266. Histidine 305 serves as a coordination point for Zn(2+). 305-307 (HDH) lines the substrate pocket. Fe cation is bound at residue histidine 307. Asparagine 371 and asparagine 384 each carry an N-linked (GlcNAc...) asparagine glycan.

It belongs to the metallophosphoesterase superfamily. Purple acid phosphatase family. In terms of assembly, homodimer. Fe cation is required as a cofactor. Zn(2+) serves as cofactor. As to expression, specifically expressed in flowers.

Its subcellular location is the secreted. The protein is Probable inactive purple acid phosphatase 14 (PAP14) of Arabidopsis thaliana (Mouse-ear cress).